The chain runs to 234 residues: R-spondin-4 (234 aa).

A signal peptide spans 1-19; it reads MRAPLCLLLLVAHAVDMLA. Residue N34 is glycosylated (N-linked (GlcNAc...) asparagine). 11 disulfides stabilise this stretch: C35-C41, C38-C47, C50-C69, C73-C88, C91-C98, C95-C104, C107-C118, C122-C135, C139-C181, C150-C157, and C190-C196. The stretch at 85–128 is one FU repeat; the sequence is VNRCKKCGATCESCFSQDFCIRCKRQFYLYKGKCLPTCPPGTLA. Residues 138–197 enclose the TSP type-1 domain; it reads ECELGPWGGWSPCTHNGKTCGSAWGLESRVREAGRAGHEEAATCQVLSESRKCPIQRPCP. Residues 190–234 are disordered; the sequence is CPIQRPCPGERSPGQKKGRKDRRPRKDRKLDRRLDVRPRQPGLQP. Positions 203–216 are enriched in basic residues; sequence GQKKGRKDRRPRKD. Residues 217–227 are compositionally biased toward basic and acidic residues; that stretch reads RKLDRRLDVRP.

It belongs to the R-spondin family. As to quaternary structure, binds heparin. Interacts with LGR4, LGR5 and LGR6. Tyr-112 may be phosphorylated; however as this position is probably extracellular, the vivo relevance is not proven.

It localises to the secreted. Functionally, activator of the canonical Wnt signaling pathway by acting as a ligand for LGR4-6 receptors. Upon binding to LGR4-6 (LGR4, LGR5 or LGR6), LGR4-6 associate with phosphorylated LRP6 and frizzled receptors that are activated by extracellular Wnt receptors, triggering the canonical Wnt signaling pathway to increase expression of target genes. Also regulates the canonical Wnt/beta-catenin-dependent pathway and non-canonical Wnt signaling by acting as an inhibitor of ZNRF3, an important regulator of the Wnt signaling pathway. In Homo sapiens (Human), this protein is R-spondin-4 (RSPO4).